Reading from the N-terminus, the 508-residue chain is Photosystem II CP47 reaction center protein (508 aa).

Helical transmembrane passes span 21–36, 101–115, 140–156, 203–218, 237–252, and 457–472; these read AVHI…WAGS, IVFS…IWHW, GIHL…FGAF, IAAG…FHLS, VLSS…AFVV, and SFAL…HGAR.

This sequence belongs to the PsbB/PsbC family. PsbB subfamily. As to quaternary structure, PSII is composed of 1 copy each of membrane proteins PsbA, PsbB, PsbC, PsbD, PsbE, PsbF, PsbH, PsbI, PsbJ, PsbK, PsbL, PsbM, PsbT, PsbX, PsbY, PsbZ, Psb30/Ycf12, at least 3 peripheral proteins of the oxygen-evolving complex and a large number of cofactors. It forms dimeric complexes. Binds multiple chlorophylls. PSII binds additional chlorophylls, carotenoids and specific lipids. is required as a cofactor.

The protein localises to the plastid. It is found in the chloroplast thylakoid membrane. Functionally, one of the components of the core complex of photosystem II (PSII). It binds chlorophyll and helps catalyze the primary light-induced photochemical processes of PSII. PSII is a light-driven water:plastoquinone oxidoreductase, using light energy to abstract electrons from H(2)O, generating O(2) and a proton gradient subsequently used for ATP formation. The protein is Photosystem II CP47 reaction center protein of Nandina domestica (Heavenly bamboo).